The primary structure comprises 348 residues: Probable dual-specificity RNA methyltransferase RlmN (348 aa).

The active-site Proton acceptor is the glutamate 90. The Radical SAM core domain occupies 96–324 (AAERLTVCVS…ASVRHTRGLE (229 aa)). An intrachain disulfide couples cysteine 103 to cysteine 329. Residues cysteine 110, cysteine 114, and cysteine 117 each contribute to the [4Fe-4S] cluster site. Residues 157–158 (GE), serine 187, 210–212 (SLH), and asparagine 286 contribute to the S-adenosyl-L-methionine site. Cysteine 329 serves as the catalytic S-methylcysteine intermediate.

Belongs to the radical SAM superfamily. RlmN family. Requires [4Fe-4S] cluster as cofactor.

It is found in the cytoplasm. The enzyme catalyses adenosine(2503) in 23S rRNA + 2 reduced [2Fe-2S]-[ferredoxin] + 2 S-adenosyl-L-methionine = 2-methyladenosine(2503) in 23S rRNA + 5'-deoxyadenosine + L-methionine + 2 oxidized [2Fe-2S]-[ferredoxin] + S-adenosyl-L-homocysteine. It catalyses the reaction adenosine(37) in tRNA + 2 reduced [2Fe-2S]-[ferredoxin] + 2 S-adenosyl-L-methionine = 2-methyladenosine(37) in tRNA + 5'-deoxyadenosine + L-methionine + 2 oxidized [2Fe-2S]-[ferredoxin] + S-adenosyl-L-homocysteine. Specifically methylates position 2 of adenine 2503 in 23S rRNA and position 2 of adenine 37 in tRNAs. The protein is Probable dual-specificity RNA methyltransferase RlmN of Gloeobacter violaceus (strain ATCC 29082 / PCC 7421).